The primary structure comprises 505 residues: Lysine--tRNA ligase (505 aa).

The segment covering 1–11 (MSDQQLDQPSL) has biased composition (polar residues). Positions 1 to 23 (MSDQQLDQPSLSHEERQHEENKL) are disordered. Positions 12–23 (SHEERQHEENKL) are enriched in basic and acidic residues. Glu-415 and Glu-422 together coordinate Mg(2+).

The protein belongs to the class-II aminoacyl-tRNA synthetase family. In terms of assembly, homodimer. Requires Mg(2+) as cofactor.

The protein localises to the cytoplasm. The catalysed reaction is tRNA(Lys) + L-lysine + ATP = L-lysyl-tRNA(Lys) + AMP + diphosphate. This chain is Lysine--tRNA ligase, found in Ectopseudomonas mendocina (strain ymp) (Pseudomonas mendocina).